Reading from the N-terminus, the 358-residue chain is MFNSFGNIFRLTSFGESHGKGIGGVIDGFPAGIVIDEEFVQQELNRRRPGQSVITTSRKEADKVEFLSGIFEGKSTGCPIGFIVWNENQHSNDYNNLEKVYRPSHADYTYTVKYGIRDHRGGGRSSARETISRVVGGALAKLALRQLGIHITAYTSQVGPIKLEGNYTDYDLDLIETNPVRCPDPEKAKEMQDLIYKIKGEGDTIGGVLTCVIKGCPIGLGQPVYGKLHAALGNAMLSINAAKAFEYGDGFKGLKQKGSEQNDVFYNNNGRIETRTNHSGGIQGGISNGQDIFFRVAFKPVATVLMEQETVNIDGIDTTLKARGRHDPCVLPRAVPIVEAMAAMTILDYYLLDRMTQL.

Arginine 47 serves as a coordination point for NADP(+). Residues 124–126 (RSS), 240–241 (NA), glycine 284, 299–303 (KPVAT), and arginine 325 each bind FMN.

Belongs to the chorismate synthase family. As to quaternary structure, homotetramer. Requires FMNH2 as cofactor.

The enzyme catalyses 5-O-(1-carboxyvinyl)-3-phosphoshikimate = chorismate + phosphate. It participates in metabolic intermediate biosynthesis; chorismate biosynthesis; chorismate from D-erythrose 4-phosphate and phosphoenolpyruvate: step 7/7. Catalyzes the anti-1,4-elimination of the C-3 phosphate and the C-6 proR hydrogen from 5-enolpyruvylshikimate-3-phosphate (EPSP) to yield chorismate, which is the branch point compound that serves as the starting substrate for the three terminal pathways of aromatic amino acid biosynthesis. This reaction introduces a second double bond into the aromatic ring system. The chain is Chorismate synthase from Bacteroides fragilis (strain YCH46).